The chain runs to 278 residues: Large ribosomal subunit protein uL2 (278 aa).

Basic residues-rich tracts occupy residues 210-219 (RSRWLGKRPQ) and 252-263 (KKSRGIKTRNSK). Residues 210–278 (RSRWLGKRPQ…LIIRHRKGNK (69 aa)) form a disordered region.

This sequence belongs to the universal ribosomal protein uL2 family. In terms of assembly, part of the 50S ribosomal subunit. Forms a bridge to the 30S subunit in the 70S ribosome.

Its function is as follows. One of the primary rRNA binding proteins. Required for association of the 30S and 50S subunits to form the 70S ribosome, for tRNA binding and peptide bond formation. It has been suggested to have peptidyltransferase activity; this is somewhat controversial. Makes several contacts with the 16S rRNA in the 70S ribosome. In Lactobacillus johnsonii (strain CNCM I-12250 / La1 / NCC 533), this protein is Large ribosomal subunit protein uL2.